Reading from the N-terminus, the 237-residue chain is N-demethylindolmycin N-methyltransferase (237 aa).

The protein belongs to the methyltransferase superfamily.

The enzyme catalyses N-demethylindolmycin + S-adenosyl-L-methionine = indolmycin + S-adenosyl-L-homocysteine + H(+). Involved in the biosynthesis of the antibiotic indolmycin, an inhibitor of the bacterial tryptophan-tRNA synthetases. Catalyzes the methylation of N-demethylindolmycin to yield indolmycin, with S-adenosylmethionine (AdoMet) acting as the methyl donor. The sequence is that of N-demethylindolmycin N-methyltransferase from Streptomyces griseus.